The following is a 607-amino-acid chain: MAVVTASSAGPSYAPEDPTLPKPWKGLVDGTTGFIYFWNPETNDTQYERPVPSSHAVSAPAHKSSVFVSSSVEKPSQGQRYDADGGHNRGSNNKIARSSSDRFHDGTSVHEGYGSLGVGSDISQESYCRRNEISVTGGDVPAPLTSFEATGFPSEIVREMHQAGFSAPTPIQAQSWPIALQGRDIVAIAKTGSGKTLGYLMPAFIHLQQRRKNPQLGPTILVLSPTRELATQIQAEAVKFGKSSRISCTCLYGGAPKGPQLRELSRGVDIVVATPGRLNDILEMRRVSLGQVSYLVLDEADRMLDMGFEPQIRKIVKEVPVQRQTLMYTATWPKGVRKIAADLLVNSVQVNIGNVDELVANKSITQHIEVVLPMEKQRRVEQILRSKEPGSKIIIFCSTKKMCDQLSRNLTRNFGAAAIHGDKSQGERDYVLSQFRAGRSPVLVATDVAARGLDIKDIRVVINYDFPTGIEDYVHRIGRTGRAGASGLAYTFFSDQDSKHALDLVKVLEGANQCVPTELRDMASRGGGMGRARNHWGSGPGGRGGRGGPYNSSYVGRNGGHGYDRGSRDSDRYGHGTYNADAPRKRSRSRSPNIGSGWSGKKSRFTD.

Over residues 1-10 the composition is skewed to polar residues; sequence MAVVTASSAG. Disordered regions lie at residues 1 to 25 and 66 to 108; these read MAVVTASSAGPSYAPEDPTLPKPWK and VFVS…DGTS. One can recognise a WW domain in the interval 18-52; that stretch reads PTLPKPWKGLVDGTTGFIYFWNPETNDTQYERPVP. Polar residues predominate over residues 89–98; sequence RGSNNKIARS. Basic and acidic residues predominate over residues 99–108; sequence SSDRFHDGTS. Residues 145–173 carry the Q motif motif; it reads TSFEATGFPSEIVREMHQAGFSAPTPIQA. Positions 176 to 350 constitute a Helicase ATP-binding domain; it reads WPIALQGRDI…ADLLVNSVQV (175 aa). ATP is bound at residue 189-196; it reads AKTGSGKT. The DEAD box signature appears at 298 to 301; it reads DEAD. The 145-residue stretch at 379–523 folds into the Helicase C-terminal domain; that stretch reads RVEQILRSKE…CVPTELRDMA (145 aa). The interval 519–607 is disordered; the sequence is LRDMASRGGG…WSGKKSRFTD (89 aa). Positions 538–548 are enriched in gly residues; that stretch reads SGPGGRGGRGG. Residues 562–574 show a composition bias toward basic and acidic residues; the sequence is GYDRGSRDSDRYG.

The protein belongs to the DEAD box helicase family.

It catalyses the reaction ATP + H2O = ADP + phosphate + H(+). The chain is ATP-dependent RNA helicase-like protein DB10 from Nicotiana sylvestris (Wood tobacco).